The sequence spans 590 residues: Ovarian abundant message protein (590 aa).

Positions M1 to Q71 are disordered. Over residues S18–Y29 the composition is skewed to basic residues. 27 consecutive repeat copies span residues P66–Q71, P72–R77, P78–Q83, P84–Q89, P90–Q95, P96–Q101, P102–Q107, P108–Q113, P114–Q119, P120–Q125, P126–Q131, P132–Q137, P138–Q143, P144–Q149, P150–Q155, P156–Q161, P162–Q167, P168–Q173, P174–Q179, P180–Q185, P300–P305, P306–P311, P312–L317, P318–P323, P324–P329, P330–P335, and P336–L341. The interval P66 to Q185 is 20 X 6 AA tandem repeats of P-[LP]-V-[EG]-[EG]-[QR]. The interval P300–L347 is 8 X 6 AA approximate tandem repeats of P-L-A-[GV]-[AV]-[PL]. The stretch at P342–L347 is one 2-8; approximate repeat. Tandem repeats lie at residues R348–L353, R354–L359, R360–L365, R366–L371, R372–L377, R378–L383, R384–L389, R390–L395, R396–L401, R402–L407, R408–V413, Q419–V424, Q425–V430, Q431–V436, Q437–V442, and Q443–V448. An 11 X 6 AA tandem repeats of approximate R-R-A-[GD]-V-[LV] region spans residues R348–V413. The tract at residues Q419–V454 is 6 X 6 AA approximate tandem repeats of Q-[QR]-L-A-D-V. A 4-6; approximate repeat occupies Q449–V454.

In terms of tissue distribution, somatic ovarian tissue.

The protein is Ovarian abundant message protein (OAM) of Ascaris suum (Pig roundworm).